The chain runs to 1167 residues: RNA-directed RNA polymerase (1167 aa).

Residues 553-735 (LTYGILAEAT…KALASYTGLE (183 aa)) form the RdRp catalytic domain.

Belongs to the reoviridae RNA-directed RNA polymerase family. In terms of assembly, interacts with VP3 (Potential). Interacts with VP2 (Potential). Interacts with NSP5; this interaction is probably necessary for the formation of functional virus factories.

Its subcellular location is the virion. The enzyme catalyses RNA(n) + a ribonucleoside 5'-triphosphate = RNA(n+1) + diphosphate. RNA-directed RNA polymerase that is involved in both transcription and genome replication. Together with VP3 capping enzyme, forms an enzyme complex positioned near the channels situated at each of the five-fold vertices of the core. Following infection, the outermost layer of the virus is lost, leaving a double-layered particle (DLP) made up of the core and VP6 shell. VP1 then catalyzes the transcription of fully conservative plus-strand genomic RNAs that are extruded through the DLP's channels into the cytoplasm where they function as mRNAs for translation of viral proteins. One copy of each of the viral (+)RNAs is also recruited during core assembly, together with newly synthesized polymerase complexes and VP2. The polymerase of these novo-formed particles catalyzes the synthesis of complementary minus-strands leading to dsDNA formation. To do so, the polymerase specifically recognizes conserved 3' sequence(s) in plus-strand RNA templates. Once dsRNA synthesis is complete, the polymerase switches to the transcriptional mode, thus providing secondary transcription. The polypeptide is RNA-directed RNA polymerase (Rotavirus X (isolate RVX/Human/Bangladesh/NADRV-B219/2002/GXP[X]) (RV ADRV-N)).